The following is a 321-amino-acid chain: Probable arabinan endo-1,5-alpha-L-arabinosidase A (321 aa).

The first 19 residues, 1 to 19 (MYRLLSVASVPLLASLVHG), serve as a signal peptide directing secretion. The active-site Proton acceptor is aspartate 34. Glutamate 200 serves as the catalytic Proton donor. Asparagine 295 is a glycosylation site (N-linked (GlcNAc...) asparagine).

This sequence belongs to the glycosyl hydrolase 43 family.

It is found in the secreted. It carries out the reaction Endohydrolysis of (1-&gt;5)-alpha-arabinofuranosidic linkages in (1-&gt;5)-arabinans.. It functions in the pathway glycan metabolism; L-arabinan degradation. Its function is as follows. Endo-1,5-alpha-L-arabinanase involved in degradation of pectin. Its preferred substrate is linear 1,5-alpha-L-arabinan. The protein is Probable arabinan endo-1,5-alpha-L-arabinosidase A (abnA) of Aspergillus niger (strain ATCC MYA-4892 / CBS 513.88 / FGSC A1513).